Here is a 301-residue protein sequence, read N- to C-terminus: ATP synthase gamma chain (301 aa).

Belongs to the ATPase gamma chain family. As to quaternary structure, F-type ATPases have 2 components, CF(1) - the catalytic core - and CF(0) - the membrane proton channel. CF(1) has five subunits: alpha(3), beta(3), gamma(1), delta(1), epsilon(1). CF(0) has three main subunits: a, b and c.

Its subcellular location is the cell inner membrane. Functionally, produces ATP from ADP in the presence of a proton gradient across the membrane. The gamma chain is believed to be important in regulating ATPase activity and the flow of protons through the CF(0) complex. This is ATP synthase gamma chain from Bordetella avium (strain 197N).